The primary structure comprises 61 residues: Large ribosomal subunit protein uL29 (61 aa).

The protein belongs to the universal ribosomal protein uL29 family.

The protein is Large ribosomal subunit protein uL29 of Campylobacter lari (strain RM2100 / D67 / ATCC BAA-1060).